The primary structure comprises 449 residues: POU domain, class 5, transcription factor 1.1 (449 aa).

Disordered regions lie at residues 79 to 125 (ENNQ…SPPN) and 170 to 233 (YPTP…PSES). Basic and acidic residues predominate over residues 97–110 (SRIKVKEEVVHETD). Residues 170–180 (YPTPANQSPNT) show a composition bias toward polar residues. Positions 187-199 (SSMESSRCSSTNS) are enriched in low complexity. Residues 224–233 (DNEEEVPSES) show a composition bias toward acidic residues. The 75-residue stretch at 227–301 (EEVPSESEME…FLERWVVEAE (75 aa)) folds into the POU-specific domain. Positions 321 to 380 (KRKRRTNIENIVKGTLESYFMKCPKPGAQEMVQIAKELNMDKDVVRVWFCNRRQKGKRQG) form a DNA-binding region, homeobox.

The protein belongs to the POU transcription factor family. Class-5 subfamily. As to quaternary structure, interacts with components of the transcription complex that assembles on the vent2-B gene, including vent2 (via C-terminus), smad1 and smad4. Forms a repression complex on the promoters of the gsc and mix2 genes via interactions with the nodal/activin signaling pathway transducers foxh1/fast1, gtf2ird1/wbscr11 and smad2. Forms a repression complex on the promoters of the nodal/nr1 and siamois genes with the maternal factors tcf7l1/tcf3 and vegt. In terms of tissue distribution, highly enriched within the animal half of developing embryos within ectodermal and mesodermal regions. Expressed in the neuroectoderm at the early neurula stage, with expression initially extending to the future hindbrain/midbrain boundary, but later shifting toward the posterior pole where it persists within the tip of the tail in hatching embryos. Expressed at very low levels in the adult kidney.

It localises to the nucleus. Transcription factor that binds to the octamer motif (5'-ATTTGCAT-3'). Activates transcription when directly bound to the octamer DNA sequence, but can form repression complexes with other proteins at the promoter site to inhibit transcription. Binds to the promoter of the vent2-B gene to activate transcription when in the presence of other BMP signaling factors also bound to the promoter. Inhibits the competence of ectodermal cells to respond to BMP during embryogenesis thereby inhibiting epidermal differentiation and promoting neural induction. Antagonizes the activity of nodal/activin signaling by forming a transcriptional repression complex on the gsc and mix2 gene promoters to inhibit their transcription, and thus maintain the undifferentiated state of embryonic cells to prevent them from differentiating prematurely. Acts maternally to inhibit vegt and beta-catenin-activated gene transcription by forming a transcriptional repression complex on the nodal/nr1 and siamois promoters to inhibit their transcription. The chain is POU domain, class 5, transcription factor 1.1 (pou5f1.1) from Xenopus laevis (African clawed frog).